The sequence spans 335 residues: Selenide, water dikinase (335 aa).

Residue selenocysteine 7 is part of the active site. Position 7 (selenocysteine 7) is a non-standard amino acid, selenocysteine. ATP-binding positions include lysine 10 and 36–38; that span reads LGD. Aspartate 39 serves as a coordination point for Mg(2+). ATP-binding positions include aspartate 55, aspartate 78, and 126–128; that span reads GHT. Residue aspartate 78 participates in Mg(2+) binding. Position 232 (aspartate 232) interacts with Mg(2+).

The protein belongs to the selenophosphate synthase 1 family. Class I subfamily. In terms of assembly, homodimer. Mg(2+) is required as a cofactor.

It catalyses the reaction hydrogenselenide + ATP + H2O = selenophosphate + AMP + phosphate + 2 H(+). In terms of biological role, synthesizes selenophosphate from selenide and ATP. In Methanococcus maripaludis (strain DSM 14266 / JCM 13030 / NBRC 101832 / S2 / LL), this protein is Selenide, water dikinase.